A 155-amino-acid chain; its full sequence is Ribosomal RNA large subunit methyltransferase H (155 aa).

Residues Leu73, Gly104, and 123 to 128 (LSPLTL) each bind S-adenosyl-L-methionine.

Belongs to the RNA methyltransferase RlmH family. In terms of assembly, homodimer.

Its subcellular location is the cytoplasm. It catalyses the reaction pseudouridine(1915) in 23S rRNA + S-adenosyl-L-methionine = N(3)-methylpseudouridine(1915) in 23S rRNA + S-adenosyl-L-homocysteine + H(+). Its function is as follows. Specifically methylates the pseudouridine at position 1915 (m3Psi1915) in 23S rRNA. The chain is Ribosomal RNA large subunit methyltransferase H from Pseudomonas aeruginosa (strain UCBPP-PA14).